Consider the following 873-residue polypeptide: Actin-related protein 8 (873 aa).

The disordered stretch occupies residues 108-129; the sequence is DEQVKPTSSTSSTSTTEEVEIK. Residues 114–123 are compositionally biased toward low complexity; sequence TSSTSSTSTT. 368–371 provides a ligand contact to ATP; sequence DLGH. Residues 596-650 are compositionally biased toward low complexity; sequence NNNNNNNNSSSSSNNNNNNNNSGSNSNINSYNNNNNNNNNNNNNNNNNNNNSFNN. Residues 596-701 are disordered; the sequence is NNNNNNNNSS…TSSPTKKLKI (106 aa). Residues 651-668 are compositionally biased toward polar residues; that stretch reads VTIVTSTLNSNSTVPSTL. Residues 669–696 show a composition bias toward low complexity; it reads NSNSTVPSISNSNSTVPSTSTSTTSSPT. Residues 762–804 adopt a coiled-coil conformation; that stretch reads FKQLEQQYQAQQLQFQQQLQQQQQQQQQLQQQLQNSTNSATTT.

The protein belongs to the actin family. ARP8 subfamily. As to quaternary structure, component of the chromatin remodeling INO80 complex. Exists as monomers and dimers, but the dimer is most probably the biologically relevant form required for stable interactions with histones that exploits the twofold symmetry of the nucleosome core.

The protein resides in the nucleus. It localises to the cytoplasm. The protein localises to the cytoskeleton. Its function is as follows. Plays an important role in the functional organization of mitotic chromosomes. Exhibits low basal ATPase activity, and unable to polymerize. Functionally, proposed core component of the chromatin remodeling INO80 complex which is involved in transcriptional regulation, DNA replication and probably DNA repair. Strongly prefer nucleosomes and H3-H4 tetramers over H2A-H2B dimers, suggesting it may act as a nucleosome recognition module within the complex. This chain is Actin-related protein 8, found in Dictyostelium discoideum (Social amoeba).